The primary structure comprises 247 residues: tRNA (guanine-N(1)-)-methyltransferase (247 aa).

Residues Gly112 and 131 to 136 (LGDFVL) contribute to the S-adenosyl-L-methionine site.

The protein belongs to the RNA methyltransferase TrmD family. In terms of assembly, homodimer.

It is found in the cytoplasm. It catalyses the reaction guanosine(37) in tRNA + S-adenosyl-L-methionine = N(1)-methylguanosine(37) in tRNA + S-adenosyl-L-homocysteine + H(+). In terms of biological role, specifically methylates guanosine-37 in various tRNAs. In Syntrophotalea carbinolica (strain DSM 2380 / NBRC 103641 / GraBd1) (Pelobacter carbinolicus), this protein is tRNA (guanine-N(1)-)-methyltransferase.